A 477-amino-acid polypeptide reads, in one-letter code: Protein DETOXIFICATION 5 (477 aa).

The next 12 membrane-spanning stretches (helical) occupy residues 38–58 (AAPM…SVMV), 72–92 (LATA…VGAL), 113–133 (FSAI…WFYM), 146–166 (ISKV…AQAV), 187–207 (AITT…AFGL), 211–231 (GAAL…ALYV), 263–283 (AAMT…SGLL), 292–312 (VLSI…GIGA), 333–353 (AVFA…TLLF), 376–396 (LSSL…LDGV), 411–431 (VVAY…WGHM), and 436–456 (LWIG…IVTA).

This sequence belongs to the multi antimicrobial extrusion (MATE) (TC 2.A.66.1) family.

The protein resides in the membrane. The polypeptide is Protein DETOXIFICATION 5 (Arabidopsis thaliana (Mouse-ear cress)).